A 432-amino-acid polypeptide reads, in one-letter code: UDP-N-acetylglucosamine 1-carboxyvinyltransferase (432 aa).

Residue 22–23 (KN) participates in phosphoenolpyruvate binding. Arg102 contributes to the UDP-N-acetyl-alpha-D-glucosamine binding site. Cys126 functions as the Proton donor in the catalytic mechanism. Cys126 bears the 2-(S-cysteinyl)pyruvic acid O-phosphothioketal mark. Residues 131 to 135 (RPVDL), Asp317, and Ile339 each bind UDP-N-acetyl-alpha-D-glucosamine.

Belongs to the EPSP synthase family. MurA subfamily.

It localises to the cytoplasm. It carries out the reaction phosphoenolpyruvate + UDP-N-acetyl-alpha-D-glucosamine = UDP-N-acetyl-3-O-(1-carboxyvinyl)-alpha-D-glucosamine + phosphate. The protein operates within cell wall biogenesis; peptidoglycan biosynthesis. Its function is as follows. Cell wall formation. Adds enolpyruvyl to UDP-N-acetylglucosamine. This Rhodospirillum centenum (strain ATCC 51521 / SW) protein is UDP-N-acetylglucosamine 1-carboxyvinyltransferase.